The sequence spans 273 residues: Hydroxynaphthalene reductase arp2 (273 aa).

I24, D70, N97, and R130 together coordinate NADP(+). Active-site proton donor residues include S146 and S147. 4 residues coordinate NADP(+): Y160, K164, V193, and S195. Y160 acts as the Proton acceptor in catalysis. K164 functions as the Lowers pKa of active site Tyr in the catalytic mechanism.

Belongs to the short-chain dehydrogenases/reductases (SDR) family.

It localises to the endosome. It participates in pigment biosynthesis; melanin biosynthesis. Tricyclazole and pyroquilon inhibit arp2 hydroxynaphtalene reductase activity. Its function is as follows. Hydroxynaphthalene reductase; part of the gene cluster that mediates the biosynthesis of dihydroxynaphthalene (DHN)-melanin, a bluish-green pigment and a structural component of the conidial wall. The first step of the pathway is the production of the heptaketide naphtopyrone YWA1 by the polyketide synthase alb1 though condensation of acetyl-CoA with malonyl-CoA. The naphtopyrone YWA1 is then converted to the pentaketide 1,3,6,8-tetrahydroxynaphthalene (1,3,6,8-THN) by the heptaketide hydrolyase ayg1 though chain-length shortening. 1,3,6,8-THN is substrate of the hydroxynaphthalene reductase arp2 to yield scytalone. The scytalone dehydratase arp1 then reduces scytalone to 1,3,8-THN. 1,3,8-THN is also substrate of the hydroxynaphthalene reductase arp2 to yield vermelone. Vermelone is further converted by the multicopper oxidase abr1 to 1,8-DHN. Finally the laccase abr2 transforms 1,8-DHN to DHN-melanin. DHN-melanin biosynthesis appears to be initiated in endosomes where early enzymes (abl1, ayg1, arp1 and arp2) localize, with exocytosis leading to melanin deposition on the cell surface where late enzymes (abr1 and abr2) localize. DHN-melanin is an important structural component of the outer cell wall and is required for the presence of conidial surface hydrophobins. DHN-melanin also plays a crucial role in fungal virulence, including a protective role against the host's immune defenses. DHN-melanin also protects conidia against amoeba predation. This Aspergillus fumigatus (strain ATCC MYA-4609 / CBS 101355 / FGSC A1100 / Af293) (Neosartorya fumigata) protein is Hydroxynaphthalene reductase arp2.